A 494-amino-acid chain; its full sequence is Probable serine/threonine-protein kinase BSK3 (494 aa).

Glycine 2 is lipidated: N-myristoyl glycine. Residues 61–316 (ENIVSEHGEK…SLVQALAPLQ (256 aa)) form the Protein kinase domain. ATP contacts are provided by residues 67–75 (HGEKAPNVV) and lysine 89. Catalysis depends on aspartate 183, which acts as the Proton acceptor. Serine 213 and serine 215 each carry phosphoserine. Residues 423–456 (PTIYARRCLSYLMNDKAEQALSDAMQALVISPTW) form a TPR repeat.

As to quaternary structure, interacts with BRI1 and BSL1. In terms of processing, phosphorylated at Ser-213 and Ser-215 by BRI1. Phosphorylation at Ser-215 is required for its function in the regulation of brassinosteroid signaling. Phosphorylation by BRI1 disrupts the interaction between its TPR and kinase domains, thereby increasing the binding between its kinase domain and BSL1.

The protein localises to the cell membrane. It carries out the reaction L-seryl-[protein] + ATP = O-phospho-L-seryl-[protein] + ADP + H(+). The catalysed reaction is L-threonyl-[protein] + ATP = O-phospho-L-threonyl-[protein] + ADP + H(+). Its function is as follows. Probable serine/threonine kinase that acts as a positive regulator of brassinosteroid (BR) signaling downstream of BRI1. The polypeptide is Probable serine/threonine-protein kinase BSK3 (Oryza sativa subsp. japonica (Rice)).